The sequence spans 96 residues: NADH-ubiquinone oxidoreductase chain 4L (96 aa).

Transmembrane regions (helical) follow at residues 2–22, 28–48, and 62–82; these read IMILYWSLPMILFILGLFCFV, LLSMLLSLEFIVLMLFFMLFI, and MFLTFSVCEGALGLSILVSMI.

This sequence belongs to the complex I subunit 4L family.

It is found in the mitochondrion membrane. The catalysed reaction is a ubiquinone + NADH + 5 H(+)(in) = a ubiquinol + NAD(+) + 4 H(+)(out). Functionally, core subunit of the mitochondrial membrane respiratory chain NADH dehydrogenase (Complex I) that is believed to belong to the minimal assembly required for catalysis. Complex I functions in the transfer of electrons from NADH to the respiratory chain. The immediate electron acceptor for the enzyme is believed to be ubiquinone. The sequence is that of NADH-ubiquinone oxidoreductase chain 4L (mt:ND4L) from Drosophila melanogaster (Fruit fly).